A 338-amino-acid chain; its full sequence is Methionine import ATP-binding protein MetN 2 (338 aa).

Residues Ile2–Val242 enclose the ABC transporter domain. Gly39 to Ser46 contacts ATP.

The protein belongs to the ABC transporter superfamily. Methionine importer (TC 3.A.1.24) family. As to quaternary structure, the complex is composed of two ATP-binding proteins (MetN), two transmembrane proteins (MetI) and a solute-binding protein (MetQ).

It localises to the cell inner membrane. It catalyses the reaction L-methionine(out) + ATP + H2O = L-methionine(in) + ADP + phosphate + H(+). It carries out the reaction D-methionine(out) + ATP + H2O = D-methionine(in) + ADP + phosphate + H(+). Its function is as follows. Part of the ABC transporter complex MetNIQ involved in methionine import. Responsible for energy coupling to the transport system. The sequence is that of Methionine import ATP-binding protein MetN 2 from Salmonella paratyphi A (strain ATCC 9150 / SARB42).